Reading from the N-terminus, the 202-residue chain is Glycerol-3-phosphate acyltransferase (202 aa).

The next 6 membrane-spanning stretches (helical) occupy residues 2–22, 54–74, 85–105, 120–140, 141–161, and 162–182; these read MIIV…GFVI, FLVT…PLWL, FFTN…YPVY, VVLG…FIIL, KIFK…VIGS, and LIIQ…ILII.

Belongs to the PlsY family. As to quaternary structure, probably interacts with PlsX.

The protein localises to the cell membrane. The catalysed reaction is an acyl phosphate + sn-glycerol 3-phosphate = a 1-acyl-sn-glycero-3-phosphate + phosphate. It functions in the pathway lipid metabolism; phospholipid metabolism. In terms of biological role, catalyzes the transfer of an acyl group from acyl-phosphate (acyl-PO(4)) to glycerol-3-phosphate (G3P) to form lysophosphatidic acid (LPA). This enzyme utilizes acyl-phosphate as fatty acyl donor, but not acyl-CoA or acyl-ACP. In Staphylococcus aureus (strain bovine RF122 / ET3-1), this protein is Glycerol-3-phosphate acyltransferase.